Reading from the N-terminus, the 756-residue chain is Putative DNA ligase 052L (756 aa).

The active-site N6-AMP-lysine intermediate is K103. Residues 610-620 are compositionally biased toward low complexity; sequence PSAAGSASPCR. The disordered stretch occupies residues 610–630; it reads PSAAGSASPCRPTKRRDDWFD. The region spanning 648 to 742 is the BRCT domain; sequence KKRPPMQGYV…LKRQRKCRAR (95 aa).

The protein belongs to the NAD-dependent DNA ligase family.

It catalyses the reaction NAD(+) + (deoxyribonucleotide)n-3'-hydroxyl + 5'-phospho-(deoxyribonucleotide)m = (deoxyribonucleotide)n+m + AMP + beta-nicotinamide D-nucleotide.. Catalyzes the formation of phosphodiester linkages between 5'-phosphoryl and 3'-hydroxyl groups in double-stranded DNA using NAD as a coenzyme and as the energy source for the reaction. This chain is Putative DNA ligase 052L, found in Invertebrate iridescent virus 3 (IIV-3).